A 734-amino-acid polypeptide reads, in one-letter code: Diacylglycerol kinase alpha (734 aa).

2 consecutive EF-hand domains span residues 109–144 (RPED…MMRM) and 154–189 (ELRP…TVPL). Ca(2+) contacts are provided by Asp-122, Asp-124, Asn-126, Glu-133, Asp-167, Asp-169, Ser-171, Ser-173, and Glu-178. Phorbol-ester/DAG-type zinc fingers lie at residues 204–252 (QHMW…ALPC) and 268–318 (SHVW…GHEC). The region spanning 371 to 505 (SNTHPLLVFV…MDRWSVEVIP (135 aa)) is the DAGKc domain. Lys-483 bears the N6-acetyllysine mark.

Belongs to the eukaryotic diacylglycerol kinase family. As to quaternary structure, monomer.

The protein localises to the cytoplasm. The protein resides in the cytosol. It carries out the reaction a 1,2-diacyl-sn-glycerol + ATP = a 1,2-diacyl-sn-glycero-3-phosphate + ADP + H(+). The enzyme catalyses a 1-O-alkyl-sn-glycerol + ATP = a 1-O-alkyl-sn-glycero-3-phosphate + ADP + H(+). The catalysed reaction is 1-O-alkyl-2-acyl-sn-glycerol + ATP = 1-O-alkyl-2-acyl-sn-glycero-3-phosphate + ADP + H(+). It catalyses the reaction 1,2-dihexadecanoyl-sn-glycerol + ATP = 1,2-dihexadecanoyl-sn-glycero-3-phosphate + ADP + H(+). It carries out the reaction 1-hexadecanoyl-2-(9Z-octadecenoyl)-sn-glycerol + ATP = 1-hexadecanoyl-2-(9Z-octadecenoyl)-sn-glycero-3-phosphate + ADP + H(+). The enzyme catalyses 2-(9Z-octadecenoyl)-glycerol + ATP = 2-(9Z-octadecenoyl)-sn-glycero-3-phosphate + ADP + H(+). The catalysed reaction is 1,2-di-(9Z-octadecenoyl)-sn-glycerol + ATP = 1,2-di-(9Z-octadecenoyl)-sn-glycero-3-phosphate + ADP + H(+). It catalyses the reaction 1-octadecanoyl-2-(5Z,8Z,11Z,14Z-eicosatetraenoyl)-sn-glycerol + ATP = 1-octadecanoyl-2-(5Z,8Z,11Z,14Z-eicosatetraenoyl)-sn-glycero-3-phosphate + ADP + H(+). It carries out the reaction 1,2-didecanoyl-sn-glycerol + ATP = 1,2-didecanoyl-sn-glycero-3-phosphate + ADP + H(+). The enzyme catalyses 1-O-hexadecyl-2-acetyl-sn-glycerol + ATP = 1-O-hexadecyl-2-acetyl-sn-glycero-3-phosphate + ADP + H(+). The catalysed reaction is 1-O-hexadecyl-2-(5Z,8Z,11Z,14Z-eicosatetraenoyl)-sn-glycerol + ATP = 1-O-hexadecyl-2-(5Z,8Z,11Z,14Z-eicosatetraenoyl)-sn-glycero-3-phosphate + ADP + H(+). It catalyses the reaction 1-O-hexadecyl-2-(9Z-octadecenoyl)-sn-glycerol + ATP = 1-O-hexadecyl-2-(9Z-octadecenoyl)-sn-glycero-3-phosphate + ADP + H(+). It carries out the reaction 1-O-hexadecyl-sn-glycerol + ATP = 1-O-hexadecyl-sn-glycero-3-phosphate + ADP + H(+). The protein operates within lipid metabolism; glycerolipid metabolism. With respect to regulation, stimulated by calcium and phosphatidylserine. Functionally, diacylglycerol kinase that converts diacylglycerol/DAG into phosphatidic acid/phosphatidate/PA and regulates the respective levels of these two bioactive lipids. Thereby, acts as a central switch between the signaling pathways activated by these second messengers with different cellular targets and opposite effects in numerous biological processes. Also plays an important role in the biosynthesis of complex lipids. Can also phosphorylate 1-alkyl-2-acylglycerol in vitro as efficiently as diacylglycerol provided it contains an arachidonoyl group. Also involved in the production of alkyl-lysophosphatidic acid, another bioactive lipid, through the phosphorylation of 1-alkyl-2-acetyl glycerol. This chain is Diacylglycerol kinase alpha (DGKA), found in Bos taurus (Bovine).